The chain runs to 550 residues: Glucose-6-phosphate isomerase (550 aa).

Glutamate 356 (proton donor) is an active-site residue. Catalysis depends on residues histidine 387 and lysine 515.

The protein belongs to the GPI family.

Its subcellular location is the cytoplasm. The catalysed reaction is alpha-D-glucose 6-phosphate = beta-D-fructose 6-phosphate. The protein operates within carbohydrate biosynthesis; gluconeogenesis. It participates in carbohydrate degradation; glycolysis; D-glyceraldehyde 3-phosphate and glycerone phosphate from D-glucose: step 2/4. Its function is as follows. Catalyzes the reversible isomerization of glucose-6-phosphate to fructose-6-phosphate. In Vibrio parahaemolyticus serotype O3:K6 (strain RIMD 2210633), this protein is Glucose-6-phosphate isomerase.